We begin with the raw amino-acid sequence, 164 residues long: FMN reductase (NADH) RutF (164 aa).

Belongs to the non-flavoprotein flavin reductase family. RutF subfamily.

The catalysed reaction is FMNH2 + NAD(+) = FMN + NADH + 2 H(+). In terms of biological role, catalyzes the reduction of FMN to FMNH2 which is used to reduce pyrimidine by RutA via the Rut pathway. This chain is FMN reductase (NADH) RutF, found in Escherichia coli O150:H5 (strain SE15).